The primary structure comprises 182 residues: ATP-dependent protease subunit HslV (182 aa).

Thr-2 is a catalytic residue. Na(+) contacts are provided by Gly-157, Cys-160, and Thr-163.

Belongs to the peptidase T1B family. HslV subfamily. In terms of assembly, a double ring-shaped homohexamer of HslV is capped on each side by a ring-shaped HslU homohexamer. The assembly of the HslU/HslV complex is dependent on binding of ATP.

The protein resides in the cytoplasm. The catalysed reaction is ATP-dependent cleavage of peptide bonds with broad specificity.. With respect to regulation, allosterically activated by HslU binding. Its function is as follows. Protease subunit of a proteasome-like degradation complex believed to be a general protein degrading machinery. This Sodalis glossinidius (strain morsitans) protein is ATP-dependent protease subunit HslV.